The following is a 352-amino-acid chain: Organic solute transporter subunit alpha (352 aa).

The Extracellular portion of the chain corresponds to 1-45 (MDVAHPEEVTRFSPDILMEKFNVSEACFLPPPISIQLILQLTWLD). Asparagine 22 carries an N-linked (GlcNAc...) asparagine glycan. The chain crosses the membrane as a helical span at residues 46–66 (IGVFAALTAMTVLTIAIYLEI). Residues 67-82 (VCYLMDKVKCPIKRKT) are Cytoplasmic-facing. Residues 83 to 103 (LMWNSAAPTVIAITSCLGLWV) form a helical membrane-spanning segment. The Extracellular portion of the chain corresponds to 104–108 (PRAIM). Residues 109–129 (FVDMAAAMYFGVGFYLMLLII) form a helical membrane-spanning segment. The Cytoplasmic portion of the chain corresponds to 130 to 173 (VQGYGGEEAMLQHLATHTIRISTGPCCCCCPCLPHIHLTRQKYK). A helical transmembrane segment spans residues 174 to 194 (IFVLGAFQVAFLRPALFLLGV). The Extracellular portion of the chain corresponds to 195-210 (VLWTNGLYDPDDWSST). The chain crosses the membrane as a helical span at residues 211–231 (SIFLWLNLFLGVSTILGLWPV). Residues 232 to 250 (NVLFRHSKVLMADQKLTCK) lie on the Cytoplasmic side of the membrane. Residues 251–271 (FALFQAILILSSLQNSIIGTL) form a helical membrane-spanning segment. Residues 272-294 (AGAGHIGCAPPYSARTRGQQMNN) lie on the Extracellular side of the membrane. A helical transmembrane segment spans residues 295–312 (QLLIIEMFFVGILTRISY). Topologically, residues 313 to 352 (RKRDDRPGHRHVGEVQQIVRECDQPAIADQQADHSSISHI) are cytoplasmic.

The protein belongs to the OST-alpha family. Interacts with slc51b. The Ost-alpha/Ost-beta complex is a heterodimer composed of alpha (slc51a) and beta (slc51b) subunit. Expressed in liver.

The protein localises to the cell membrane. It is found in the endoplasmic reticulum membrane. The enzyme catalyses taurocholate(out) = taurocholate(in). The catalysed reaction is prostaglandin E2(out) = prostaglandin E2(in). It carries out the reaction estrone 3-sulfate(out) = estrone 3-sulfate(in). It catalyses the reaction dehydroepiandrosterone 3-sulfate(out) = dehydroepiandrosterone 3-sulfate(in). The enzyme catalyses tauroursodeoxycholate(out) = tauroursodeoxycholate(in). The catalysed reaction is glycoursodeoxycholate(out) = glycoursodeoxycholate(in). It carries out the reaction glycocholate(out) = glycocholate(in). It catalyses the reaction taurochenodeoxycholate(out) = taurochenodeoxycholate(in). The enzyme catalyses glycochenodeoxycholate(out) = glycochenodeoxycholate(in). The catalysed reaction is taurodeoxycholate(out) = taurodeoxycholate(in). It carries out the reaction glycodeoxycholate(out) = glycodeoxycholate(in). In terms of biological role, essential component of the Ost-alpha/Ost-beta complex, a heterodimer that acts as the intestinal basolateral transporter responsible for the translocation of bile acids (such as taurocholate), steroids (such as estrone sulfate), and eicosanoids (such as prostaglandin E2). This chain is Organic solute transporter subunit alpha (slc51a), found in Leucoraja erinaceus (Little skate).